Reading from the N-terminus, the 638-residue chain is 3D-(3,5/4)-trihydroxycyclohexane-1,2-dione hydrolase (638 aa).

Glu67 contributes to the thiamine diphosphate binding site. A thiamine pyrophosphate binding region spans residues Ser442 to Gly523. Residues Asp494 and Asn521 each contribute to the Mg(2+) site.

The protein belongs to the TPP enzyme family. It depends on Mg(2+) as a cofactor. The cofactor is thiamine diphosphate.

It carries out the reaction 3D-3,5/4-trihydroxycyclohexane-1,2-dione + H2O = 5-deoxy-D-glucuronate + H(+). Its pathway is polyol metabolism; myo-inositol degradation into acetyl-CoA; acetyl-CoA from myo-inositol: step 3/7. Involved in the cleavage of the C1-C2 bond of 3D-(3,5/4)-trihydroxycyclohexane-1,2-dione (THcHDO) to yield 5-deoxy-glucuronate (5DG). The sequence is that of 3D-(3,5/4)-trihydroxycyclohexane-1,2-dione hydrolase from Listeria innocua serovar 6a (strain ATCC BAA-680 / CLIP 11262).